A 294-amino-acid chain; its full sequence is MRVEIVAADSLGVRSIATFVEACGYSIGVDLGASIAPRRFSLPPHPRELRRLEQALDRARRRLEESNIAIITHYHYDHYLRDEPELYAGRLLLAKDINRSINRSQRFRGYRFLVKSGLVERGRVEYADSRVFRLEGGLTIEFSKPVWHGEEGTKLGKVLMVRITCEGVSIVFASDVQGPGNNEALEELLKWSKPRPLVLIISGPPLYLGGYRVGMSSVELGIRNLEVLAERLRPKRLVVDHHLVRDPRFPEVLERLRGRAAGAGVEVLTAAEYMGLRPEPLETMRRELWKGEEG.

The protein belongs to the UPF0282 family.

The chain is UPF0282 protein APE_0500.1 from Aeropyrum pernix (strain ATCC 700893 / DSM 11879 / JCM 9820 / NBRC 100138 / K1).